Here is a 129-residue protein sequence, read N- to C-terminus: Small ribosomal subunit protein eS8 (129 aa).

A disordered region spans residues 1-29 (MSVWQGRSRRKPTGGLYRPARKKRKYEMG).

Belongs to the eukaryotic ribosomal protein eS8 family. As to quaternary structure, part of the 30S ribosomal subunit.

The sequence is that of Small ribosomal subunit protein eS8 (rps8e) from Methanocaldococcus jannaschii (strain ATCC 43067 / DSM 2661 / JAL-1 / JCM 10045 / NBRC 100440) (Methanococcus jannaschii).